A 327-amino-acid chain; its full sequence is Phenylalanine--tRNA ligase alpha subunit (327 aa).

E252 lines the Mg(2+) pocket.

Belongs to the class-II aminoacyl-tRNA synthetase family. Phe-tRNA synthetase alpha subunit type 1 subfamily. Tetramer of two alpha and two beta subunits. Requires Mg(2+) as cofactor.

It localises to the cytoplasm. The catalysed reaction is tRNA(Phe) + L-phenylalanine + ATP = L-phenylalanyl-tRNA(Phe) + AMP + diphosphate + H(+). This chain is Phenylalanine--tRNA ligase alpha subunit, found in Escherichia coli O127:H6 (strain E2348/69 / EPEC).